The primary structure comprises 737 residues: Methylcrotonoyl-CoA carboxylase subunit alpha, mitochondrial (737 aa).

The N-terminal 33 residues, 1–33 (MASRLLLLPRRRSRHGGASLLLARLLSSSSSEA), are a transit peptide targeting the mitochondrion. The 448-residue stretch at 38 to 485 (AVEKVLVANR…DTHFIERYQN (448 aa)) folds into the Biotin carboxylation domain. ATP is bound by residues Lys153, 185–246 (ANKI…PRHI), Glu237, and His272. Residues 157-355 (KRIMGAAGVP…LVEWQIRIAN (199 aa)) form the ATP-grasp domain. Mn(2+) contacts are provided by Glu312, Glu326, and Asn328. Residue Arg330 is part of the active site. Residues 636–665 (YRQTLRAEQSPDDSSQPSASSEARSHPKGS) form a disordered region. Residues 647-657 (DDSSQPSASSE) are compositionally biased toward low complexity. The 77-residue stretch at 656–732 (SEARSHPKGS…FDSSVLFTVK (77 aa)) folds into the Biotinyl-binding domain. Lys698 carries the post-translational modification N6-biotinyllysine.

In terms of assembly, probably a heterodimer composed of biotin-containing alpha subunits and beta subunits. Biotin serves as cofactor. It depends on Mn(2+) as a cofactor.

Its subcellular location is the mitochondrion matrix. It catalyses the reaction 3-methylbut-2-enoyl-CoA + hydrogencarbonate + ATP = 3-methyl-(2E)-glutaconyl-CoA + ADP + phosphate + H(+). Its pathway is amino-acid degradation; L-leucine degradation; (S)-3-hydroxy-3-methylglutaryl-CoA from 3-isovaleryl-CoA: step 2/3. Biotin-attachment subunit of the 3-methylcrotonyl-CoA carboxylase, an enzyme that catalyzes the conversion of 3-methylcrotonyl-CoA to 3-methylglutaconyl-CoA, a critical step for leucine and isovaleric acid catabolism. This is Methylcrotonoyl-CoA carboxylase subunit alpha, mitochondrial (MCCA) from Oryza sativa subsp. japonica (Rice).